Consider the following 314-residue polypeptide: Probable dimethyladenosine transferase (314 aa).

His-36, Leu-38, Gly-63, Glu-84, Asp-112, and Asn-127 together coordinate S-adenosyl-L-methionine.

Belongs to the class I-like SAM-binding methyltransferase superfamily. rRNA adenine N(6)-methyltransferase family. In terms of assembly, part of the small subunit (SSU) processome, composed of more than 70 proteins and the RNA chaperone small nucleolar RNA (snoRNA) U3.

The protein resides in the nucleus. Its subcellular location is the nucleoplasm. It is found in the nucleolus. The catalysed reaction is adenosine(1779)/adenosine(1780) in 18S rRNA + 4 S-adenosyl-L-methionine = N(6)-dimethyladenosine(1779)/N(6)-dimethyladenosine(1780) in 18S rRNA + 4 S-adenosyl-L-homocysteine + 4 H(+). Specifically dimethylates two adjacent adenosines in the loop of a conserved hairpin near the 3'-end of 18S rRNA in the 40S particle. Involved in the pre-rRNA processing steps leading to small-subunit rRNA production independently of its RNA-modifying catalytic activity. Part of the small subunit (SSU) processome, first precursor of the small eukaryotic ribosomal subunit. During the assembly of the SSU processome in the nucleolus, many ribosome biogenesis factors, an RNA chaperone and ribosomal proteins associate with the nascent pre-rRNA and work in concert to generate RNA folding, modifications, rearrangements and cleavage as well as targeted degradation of pre-ribosomal RNA by the RNA exosome. In Dictyostelium discoideum (Social amoeba), this protein is Probable dimethyladenosine transferase (dimt1).